Reading from the N-terminus, the 479-residue chain is mRNA export factor ICP27 homolog (479 aa).

Positions 1–15 (MVPSQRLSRTSSISS) are enriched in low complexity. Disordered regions lie at residues 1-78 (MVPS…SSVV) and 92-210 (KWDL…NKPW). A compositionally biased stretch (acidic residues) spans 35-44 (TDCDMDPMEG). A compositionally biased stretch (basic and acidic residues) spans 132 to 142 (EVHGCTDESYG). Zn(2+)-binding residues include Cys354, His445, Cys449, and Cys454. Residues 354 to 454 (CFLPNTRDYN…HTRDCRSASC (101 aa)) form a CHC2-type zinc finger.

This sequence belongs to the HHV-1 ICP27 protein family. As to quaternary structure, interacts with host XPO1 and with the XPO1 export pathway components small GTPase RAN and nucleoporin NUP214. Interacts with host SPEN, OTT1 and OTT3. Interacts with host SRSF1, SRSF3, SRSF7 and SRPK1. Interacts with host DHX9; this interaction may have an inhibitory effect on virion production. Interacts (via N-terminus) with host NXF1; this interaction plays a role in mRNA export. Phosphorylated by cellular protein kinase CK2.

The protein localises to the host nucleus. The protein resides in the host cytoplasm. Its function is as follows. Promotes the nuclear export of a subset of early and late viral mRNAs by interacting with mRNAs and cellular export proteins. Additionally may prevent the establishment of cellular antiviral state, by acting as an alternative splicing factor for cellular RNAs such as STAT1, resulting in a STAT1 mRNA incapable of producing the STAT1alpha isoform. The sequence is that of mRNA export factor ICP27 homolog from Homo sapiens (Human).